Here is a 402-residue protein sequence, read N- to C-terminus: NADH-quinone oxidoreductase subunit D (402 aa).

It belongs to the complex I 49 kDa subunit family. As to quaternary structure, NDH-1 is composed of 14 different subunits. Subunits NuoB, C, D, E, F, and G constitute the peripheral sector of the complex.

It localises to the cell inner membrane. It carries out the reaction a quinone + NADH + 5 H(+)(in) = a quinol + NAD(+) + 4 H(+)(out). Functionally, NDH-1 shuttles electrons from NADH, via FMN and iron-sulfur (Fe-S) centers, to quinones in the respiratory chain. The immediate electron acceptor for the enzyme in this species is believed to be ubiquinone. Couples the redox reaction to proton translocation (for every two electrons transferred, four hydrogen ions are translocated across the cytoplasmic membrane), and thus conserves the redox energy in a proton gradient. This chain is NADH-quinone oxidoreductase subunit D, found in Rhodopseudomonas palustris (strain TIE-1).